The primary structure comprises 680 residues: DNA-directed RNA polymerase subunit beta' (680 aa).

Zn(2+) is bound by residues Cys-69, Cys-71, Cys-87, and Cys-90. Residues Asp-489, Asp-491, and Asp-493 each coordinate Mg(2+).

The protein belongs to the RNA polymerase beta' chain family. RpoC1 subfamily. As to quaternary structure, in plastids the minimal PEP RNA polymerase catalytic core is composed of four subunits: alpha, beta, beta', and beta''. When a (nuclear-encoded) sigma factor is associated with the core the holoenzyme is formed, which can initiate transcription. The cofactor is Mg(2+). Zn(2+) is required as a cofactor.

It localises to the plastid. It is found in the chloroplast. The catalysed reaction is RNA(n) + a ribonucleoside 5'-triphosphate = RNA(n+1) + diphosphate. Functionally, DNA-dependent RNA polymerase catalyzes the transcription of DNA into RNA using the four ribonucleoside triphosphates as substrates. The chain is DNA-directed RNA polymerase subunit beta' from Arabis hirsuta (Hairy rock-cress).